The chain runs to 421 residues: Ubiquitin-like modifier-activating enzyme 5 (421 aa).

Residues Gly-89, Asp-110, Lys-133, Asn-156, and Asn-191 each contribute to the ATP site. Positions 233 and 236 each coordinate Zn(2+). Cys-257 functions as the Glycyl thioester intermediate in the catalytic mechanism. Zn(2+) contacts are provided by Cys-310 and Cys-315.

This sequence belongs to the ubiquitin-activating E1 family. UBA5 subfamily.

E1-like enzyme which activates UFM1. The polypeptide is Ubiquitin-like modifier-activating enzyme 5 (Oryza sativa subsp. japonica (Rice)).